The sequence spans 296 residues: MSKRTREESEMEAGPSTASPGVSVSPAPALTAGEVQLLKVPQKRFYRQRAHANVFIDHELDYPKRPELMDWSTHYPAYFSQPNEDGTITQGEKKVEWADVGCGFGGLLMALAPLFPEKLMLGMEIRTSVTKYVTDRIAATRQAQSLLPADSVDTKPGGYQNVSVIKANSMKHMPNFFAKGQLEKIFFLFPDPHFKNRKHKARIITPALLAEYAYVLRPGGILYTVTDVKDLHEWMAHHLHAHPLFEYIPTETLSDDPILEAARTATEEGQKVERNKGDKWVACFRRKEDPKEEDED.

The interval 1–26 is disordered; the sequence is MSKRTREESEMEAGPSTASPGVSVSP. Residues glycine 101, 124–125, 168–169, and leucine 188 contribute to the S-adenosyl-L-methionine site; these read EI and NS. Aspartate 191 is a catalytic residue. 266–268 serves as a coordination point for S-adenosyl-L-methionine; sequence TEE.

This sequence belongs to the class I-like SAM-binding methyltransferase superfamily. TrmB family. Forms a complex with TRM82.

The protein localises to the nucleus. It catalyses the reaction guanosine(46) in tRNA + S-adenosyl-L-methionine = N(7)-methylguanosine(46) in tRNA + S-adenosyl-L-homocysteine. It functions in the pathway tRNA modification; N(7)-methylguanine-tRNA biosynthesis. Catalyzes the formation of N(7)-methylguanine at position 46 (m7G46) in tRNA. The polypeptide is tRNA (guanine-N(7)-)-methyltransferase (Cryptococcus neoformans var. neoformans serotype D (strain JEC21 / ATCC MYA-565) (Filobasidiella neoformans)).